Here is a 352-residue protein sequence, read N- to C-terminus: UDP-N-acetylglucosamine--N-acetylmuramyl-(pentapeptide) pyrophosphoryl-undecaprenol N-acetylglucosamine transferase (352 aa).

UDP-N-acetyl-alpha-D-glucosamine-binding positions include 13–15 (TGG), Asn-125, Arg-161, Ser-189, Ile-242, 261–266 (ALTVSE), and Gln-286.

This sequence belongs to the glycosyltransferase 28 family. MurG subfamily.

Its subcellular location is the cell inner membrane. It catalyses the reaction di-trans,octa-cis-undecaprenyl diphospho-N-acetyl-alpha-D-muramoyl-L-alanyl-D-glutamyl-meso-2,6-diaminopimeloyl-D-alanyl-D-alanine + UDP-N-acetyl-alpha-D-glucosamine = di-trans,octa-cis-undecaprenyl diphospho-[N-acetyl-alpha-D-glucosaminyl-(1-&gt;4)]-N-acetyl-alpha-D-muramoyl-L-alanyl-D-glutamyl-meso-2,6-diaminopimeloyl-D-alanyl-D-alanine + UDP + H(+). The protein operates within cell wall biogenesis; peptidoglycan biosynthesis. Cell wall formation. Catalyzes the transfer of a GlcNAc subunit on undecaprenyl-pyrophosphoryl-MurNAc-pentapeptide (lipid intermediate I) to form undecaprenyl-pyrophosphoryl-MurNAc-(pentapeptide)GlcNAc (lipid intermediate II). The sequence is that of UDP-N-acetylglucosamine--N-acetylmuramyl-(pentapeptide) pyrophosphoryl-undecaprenol N-acetylglucosamine transferase from Erwinia tasmaniensis (strain DSM 17950 / CFBP 7177 / CIP 109463 / NCPPB 4357 / Et1/99).